Here is a 440-residue protein sequence, read N- to C-terminus: L-seryl-tRNA(Sec) selenium transferase (440 aa).

Lysine 282 carries the post-translational modification N6-(pyridoxal phosphate)lysine.

Belongs to the SelA family. It depends on pyridoxal 5'-phosphate as a cofactor.

The protein localises to the cytoplasm. It carries out the reaction L-seryl-tRNA(Sec) + selenophosphate + H(+) = L-selenocysteinyl-tRNA(Sec) + phosphate. The protein operates within aminoacyl-tRNA biosynthesis; selenocysteinyl-tRNA(Sec) biosynthesis; selenocysteinyl-tRNA(Sec) from L-seryl-tRNA(Sec) (bacterial route): step 1/1. Functionally, converts seryl-tRNA(Sec) to selenocysteinyl-tRNA(Sec) required for selenoprotein biosynthesis. The chain is L-seryl-tRNA(Sec) selenium transferase from Campylobacter jejuni (strain RM1221).